We begin with the raw amino-acid sequence, 523 residues long: Sensory neuron membrane protein 1 (523 aa).

At 1–11 the chain is on the cytoplasmic side; sequence MQLPRELKYAA. Residues 12–32 traverse the membrane as a helical segment; it reads IAGGVALFGLIFGWVLFPTIL. The Extracellular portion of the chain corresponds to 33-458; it reads KSQLKKEMAL…HQLFIPKRVV (426 aa). 2 N-linked (GlcNAc...) asparagine glycosylation sites follow: N67 and N229. 3 disulfides stabilise this stretch: C268–C333, C297–C352, and C335–C341. A glycan (N-linked (GlcNAc...) asparagine) is linked at N440. A helical membrane pass occupies residues 459–479; the sequence is GVLRWWMVSFGSLGAVIGIVF. The Cytoplasmic portion of the chain corresponds to 480–523; that stretch reads HFRDHIMRLAVSGDTKVSKVTPEEEEQKDISVIGQAQEPAKVNI.

It belongs to the CD36 family.

The protein localises to the cell membrane. In terms of biological role, plays an olfactory role that is not restricted to pheromone sensitivity. The chain is Sensory neuron membrane protein 1 from Helicoverpa armigera (Cotton bollworm).